A 352-amino-acid polypeptide reads, in one-letter code: tRNA pseudouridine synthase D (352 aa).

The active-site Nucleophile is the D81. A TRUD domain is found at 157–303; that stretch reads GVPNYFGAQR…MDHERRILRL (147 aa).

This sequence belongs to the pseudouridine synthase TruD family.

The enzyme catalyses uridine(13) in tRNA = pseudouridine(13) in tRNA. Its function is as follows. Responsible for synthesis of pseudouridine from uracil-13 in transfer RNAs. This Pseudomonas entomophila (strain L48) protein is tRNA pseudouridine synthase D.